The sequence spans 265 residues: Diphthine synthase (265 aa).

S-adenosyl-L-methionine is bound by residues Leu9, Asp85, Ile88, 113-114 (TA), Leu168, Ala211, and His236.

It belongs to the diphthine synthase family. Homodimer.

It carries out the reaction 2-[(3S)-amino-3-carboxypropyl]-L-histidyl-[translation elongation factor 2] + 3 S-adenosyl-L-methionine = diphthine-[translation elongation factor 2] + 3 S-adenosyl-L-homocysteine + 3 H(+). It participates in protein modification; peptidyl-diphthamide biosynthesis. Functionally, S-adenosyl-L-methionine-dependent methyltransferase that catalyzes the trimethylation of the amino group of the modified target histidine residue in translation elongation factor 2 (EF-2), to form an intermediate called diphthine. The three successive methylation reactions represent the second step of diphthamide biosynthesis. The sequence is that of Diphthine synthase from Halorubrum lacusprofundi (strain ATCC 49239 / DSM 5036 / JCM 8891 / ACAM 34).